The primary structure comprises 852 residues: Genome polyprotein (852 aa).

2 consecutive short sequence motifs ((L)YPX(n)L motif) follow at residues 167–171 (YPHGL) and 200–205 (YPVWEL). Positions 766–836 (MMSRIAAGDL…PRKMKGLFSQ (71 aa)) are involved in P1-2A pentamerization.

The protein belongs to the picornaviridae polyprotein family. In terms of assembly, homodimer. Homomultimer; probably interacts with membranes in a multimeric form. Seems to assemble into amyloid-like fibers. As to quaternary structure, homopentamer. Homooligomer. Interacts with capsid protein VP2. Interacts with capsid protein VP3. In terms of assembly, interacts with capsid protein VP1. Interacts with capsid protein VP3. As to quaternary structure, interacts with capsid protein VP1. Interacts with capsid protein VP2. In terms of processing, specific enzymatic cleavages by viral protease in vivo yield a variety of precursors and mature proteins. Polyprotein processing intermediates are produced, such as P1-2A which is a functional precursor of the structural proteins, VP0 which is a VP4-VP2 precursor, VP1-2A precursor, 3ABC precursor which is a stable and catalytically active precursor of 3A, 3B and 3C proteins, 3AB and 3CD precursors. The assembly signal 2A is removed from VP1-2A by a host protease, possibly host Cathepsin L. This cleavage occurs over a region of 3 amino-acids probably generating VP1 proteins with heterogeneous C-termini. Post-translationally, during virion maturation, immature virions are rendered infectious following cleavage of VP0 into VP4 and VP2. This maturation seems to be an autocatalytic event triggered by the presence of RNA in the capsid and is followed by a conformational change of the particle. The assembly signal 2A is removed from VP1-2A by a host protease, possibly host Cathepsin L in naked virions. This cleavage does not occur in enveloped virions. This cleavage occurs over a region of 3 amino-acids probably generating VP1 proteins with heterogeneous C-termini. In terms of processing, viral protein genome-linked: VPg is uridylylated prior to priming replication into VPg-pUpU. Post-translationally, unlike other picornaviruses, does not seem to be myristoylated.

It is found in the virion. The protein localises to the host endosome. It localises to the host multivesicular body. The protein resides in the host membrane. Functionally, capsid proteins VP1, VP2, and VP3 form a closed capsid enclosing the viral positive strand RNA genome. All these proteins contain a beta-sheet structure called beta-barrel jelly roll. Together they form an icosahedral capsid (T=3) composed of 60 copies of each VP1, VP2, and VP3, with a diameter of approximately 300 Angstroms. VP1 is situated at the 12 fivefold axes, whereas VP2 and VP3 are located at the quasi-sixfold axes. The naked capsid interacts with the host receptor HAVCR1 to provide virion attachment to and probably entry into the target cell. VP0 precursor is a component of the immature procapsids. In terms of biological role, plays a role in the assembly of the 12 pentamers into an icosahedral structure. Has not been detected in mature virions, supposedly owing to its small size. Its function is as follows. Precursor component of immature procapsids that corresponds to an extended form of the structural protein VP1. After maturation, possibly by the host Cathepsin L, the assembly signal 2A is cleaved to give rise to the mature VP1 protein. Functionally, affects membrane integrity and causes an increase in membrane permeability. Functions as a viroporin. Affects membrane integrity and causes an increase in membrane permeability. Involved in host intracellular membrane rearrangements probably to give rise to the viral factories. Does not disrupt calcium homeostasis or glycoprotein trafficking. Antagonizes the innate immune response of the host by suppressing IFN-beta synthesis, which it achieves by interfering with the RIG-I/IFIH1 pathway. The protein is Genome polyprotein of Cercopithecus hamlyni (Owl-faced monkey).